Reading from the N-terminus, the 563-residue chain is Dihydroxy-acid dehydratase (563 aa).

Asp79 is a binding site for Mg(2+). Residue Cys120 coordinates [2Fe-2S] cluster. Asp121 and Lys122 together coordinate Mg(2+). Lys122 carries the post-translational modification N6-carboxylysine. Cys193 serves as a coordination point for [2Fe-2S] cluster. Glu451 serves as a coordination point for Mg(2+). The active-site Proton acceptor is Ser477.

It belongs to the IlvD/Edd family. As to quaternary structure, homodimer. It depends on [2Fe-2S] cluster as a cofactor. The cofactor is Mg(2+).

It carries out the reaction (2R)-2,3-dihydroxy-3-methylbutanoate = 3-methyl-2-oxobutanoate + H2O. It catalyses the reaction (2R,3R)-2,3-dihydroxy-3-methylpentanoate = (S)-3-methyl-2-oxopentanoate + H2O. The protein operates within amino-acid biosynthesis; L-isoleucine biosynthesis; L-isoleucine from 2-oxobutanoate: step 3/4. Its pathway is amino-acid biosynthesis; L-valine biosynthesis; L-valine from pyruvate: step 3/4. Functionally, functions in the biosynthesis of branched-chain amino acids. Catalyzes the dehydration of (2R,3R)-2,3-dihydroxy-3-methylpentanoate (2,3-dihydroxy-3-methylvalerate) into 2-oxo-3-methylpentanoate (2-oxo-3-methylvalerate) and of (2R)-2,3-dihydroxy-3-methylbutanoate (2,3-dihydroxyisovalerate) into 2-oxo-3-methylbutanoate (2-oxoisovalerate), the penultimate precursor to L-isoleucine and L-valine, respectively. The sequence is that of Dihydroxy-acid dehydratase from Sulfurovum sp. (strain NBC37-1).